A 251-amino-acid polypeptide reads, in one-letter code: ATP synthase delta chain, chloroplastic (251 aa).

The transit peptide at 1–64 (MASLQHTTAS…STGGALGARM (64 aa)) directs the protein to the chloroplast.

Belongs to the ATPase delta chain family. As to quaternary structure, F-type ATPases have 2 components, CF(1) - the catalytic core - and CF(0) - the membrane proton channel. CF(1) has five subunits: alpha(3), beta(3), gamma(1), delta(1), epsilon(1). CF(0) has three main subunits: a, b and c.

Its subcellular location is the plastid. The protein localises to the chloroplast thylakoid membrane. Its function is as follows. This protein seems to be part of the stalk that links CF(0) to CF(1). It either transmits conformational changes from CF(0) into CF(1) or is implicated in proton conduction. This Pisum sativum (Garden pea) protein is ATP synthase delta chain, chloroplastic (ATPD).